A 143-amino-acid polypeptide reads, in one-letter code: Calcitonin (143 aa).

An N-terminal signal peptide occupies residues 1 to 25 (MGFGKSSPFLAFSILVLCQAGSLQA). The propeptide occupies 26–84 (TPLRSALETLPDPGALSEKEGRLLLAALVKAYVQRKTNELEQEEEQEETEDSSLDSSRA). S42 carries the post-translational modification Phosphoserine. The disordered stretch occupies residues 62 to 86 (TNELEQEEEQEETEDSSLDSSRAKR). Positions 65–78 (LEQEEEQEETEDSS) are enriched in acidic residues. The cysteines at positions 87 and 93 are disulfide-linked. The disordered stretch occupies residues 112–143 (GFGPETPGKKRDIANSLEKDLSSHFGVPTDAN). P118 is modified (proline amide). Positions 118-133 (PGKKRDIANSLEKDLS) are enriched in basic and acidic residues. Positions 122–143 (RDIANSLEKDLSSHFGVPTDAN) are excised as a propeptide.

The protein belongs to the calcitonin family.

Its subcellular location is the secreted. In terms of biological role, calcitonin is a peptide hormone that causes a rapid but short-lived drop in the level of calcium and phosphate in blood by promoting the incorporation of those ions in the bones. Calcitonin function is mediated by the calcitonin receptor/CALCR and the CALCR-RAMP2 (AMYR2) receptor complex. This Ovis aries (Sheep) protein is Calcitonin (CALCA).